The primary structure comprises 198 residues: MIEQIKANFTESIQTKIAASEILPEHIEKAAYMIVEALIRGNKVLSCGNGGSAGDAQHFASNMLNRYERDRPSLPAIALSTDTSTITSIANDYSYDEIFAKQVRALGQPGDILLAISTSGNSRNVIAAMEAALSRDMTIVALTGKDGGEMAGFLSEHDVEIRVPSNRTARIQEVHLLVIHNLCECIDDSLFPADHGDE.

Residues 34-196 (IVEALIRGNK…DDSLFPADHG (163 aa)) form the SIS domain. Substrate is bound at residue 49 to 51 (NGG). Residues histidine 58 and asparagine 62 each contribute to the Zn(2+) site. Substrate contacts are provided by residues asparagine 62, 91–92 (ND), 117–119 (STS), serine 122, and glutamine 172. Zn(2+)-binding residues include glutamine 172 and histidine 180.

The protein belongs to the SIS family. GmhA subfamily. In terms of assembly, homotetramer. The cofactor is Zn(2+).

Its subcellular location is the cytoplasm. The catalysed reaction is 2 D-sedoheptulose 7-phosphate = D-glycero-alpha-D-manno-heptose 7-phosphate + D-glycero-beta-D-manno-heptose 7-phosphate. Its pathway is carbohydrate biosynthesis; D-glycero-D-manno-heptose 7-phosphate biosynthesis; D-glycero-alpha-D-manno-heptose 7-phosphate and D-glycero-beta-D-manno-heptose 7-phosphate from sedoheptulose 7-phosphate: step 1/1. Its function is as follows. Catalyzes the isomerization of sedoheptulose 7-phosphate in D-glycero-D-manno-heptose 7-phosphate. This Alteromonas mediterranea (strain DSM 17117 / CIP 110805 / LMG 28347 / Deep ecotype) protein is Phosphoheptose isomerase.